We begin with the raw amino-acid sequence, 229 residues long: MVIFGLSRRIKRCTKNPIIAELKVYSPKYGDLLRGRDPLEILRRYERAGAVGISYITDPKYFRGNFDFFKRLCKETELPVLRKDFITTKEEIEKTAEAGGSAVLLITRLLKDKLPEFVDHAREHGLDTLVEVHTLEELKIAIQTNSTMIGINNRDIGKLELDDGNVSLTAKLAPLIPDKFVKVSESGITTLEDLKVALKYADAALIGTALMKTEDPEKLLKSFVEAKIC.

It belongs to the TrpC family.

The enzyme catalyses 1-(2-carboxyphenylamino)-1-deoxy-D-ribulose 5-phosphate + H(+) = (1S,2R)-1-C-(indol-3-yl)glycerol 3-phosphate + CO2 + H2O. Its pathway is amino-acid biosynthesis; L-tryptophan biosynthesis; L-tryptophan from chorismate: step 4/5. The chain is Indole-3-glycerol phosphate synthase from Pyrococcus abyssi (strain GE5 / Orsay).